The following is a 689-amino-acid chain: tRNA 5-methylaminomethyl-2-thiouridine biosynthesis bifunctional protein MnmC (689 aa).

Positions 1–245 (MNQRPIQTAT…KREMLTGTLP (245 aa)) are tRNA (mnm(5)s(2)U34)-methyltransferase. The FAD-dependent cmnm(5)s(2)U34 oxidoreductase stretch occupies residues 270–689 (IGGGIVSALT…RSPATQESSR (420 aa)).

In the N-terminal section; belongs to the methyltransferase superfamily. tRNA (mnm(5)s(2)U34)-methyltransferase family. It in the C-terminal section; belongs to the DAO family. It depends on FAD as a cofactor.

Its subcellular location is the cytoplasm. The catalysed reaction is 5-aminomethyl-2-thiouridine(34) in tRNA + S-adenosyl-L-methionine = 5-methylaminomethyl-2-thiouridine(34) in tRNA + S-adenosyl-L-homocysteine + H(+). In terms of biological role, catalyzes the last two steps in the biosynthesis of 5-methylaminomethyl-2-thiouridine (mnm(5)s(2)U) at the wobble position (U34) in tRNA. Catalyzes the FAD-dependent demodification of cmnm(5)s(2)U34 to nm(5)s(2)U34, followed by the transfer of a methyl group from S-adenosyl-L-methionine to nm(5)s(2)U34, to form mnm(5)s(2)U34. This is tRNA 5-methylaminomethyl-2-thiouridine biosynthesis bifunctional protein MnmC from Yersinia pseudotuberculosis serotype O:1b (strain IP 31758).